A 203-amino-acid polypeptide reads, in one-letter code: Small ribosomal subunit protein uS10m (203 aa).

A mitochondrion-targeting transit peptide spans 1–14 (MLRNTIALRSFIRT). Phosphoserine is present on S193.

It belongs to the universal ribosomal protein uS10 family. Component of the mitochondrial small ribosomal subunit (mt-SSU). Mature yeast 74S mitochondrial ribosomes consist of a small (37S) and a large (54S) subunit. The 37S small subunit contains a 15S ribosomal RNA (15S mt-rRNA) and 34 different proteins. The 54S large subunit contains a 21S rRNA (21S mt-rRNA) and 46 different proteins.

The protein resides in the mitochondrion. In terms of biological role, component of the mitochondrial ribosome (mitoribosome), a dedicated translation machinery responsible for the synthesis of mitochondrial genome-encoded proteins, including at least some of the essential transmembrane subunits of the mitochondrial respiratory chain. The mitoribosomes are attached to the mitochondrial inner membrane and translation products are cotranslationally integrated into the membrane. The polypeptide is Small ribosomal subunit protein uS10m (RSM10) (Saccharomyces cerevisiae (strain ATCC 204508 / S288c) (Baker's yeast)).